We begin with the raw amino-acid sequence, 117 residues long: Immunoglobulin kappa variable 1-27 (117 aa).

The signal sequence occupies residues 1 to 22 (MDMRVPAQLLGLLLLWLPDTRC). Residues 23–45 (DIQMTQSPSSLSASVGDRVTITC) form a framework-1 region. An Ig-like domain is found at 23-117 (DIQMTQSPSS…YYCQKYNSAP (95 aa)). A disulfide bridge connects residues C45 and C110. The interval 46–56 (RASQGISNYLA) is complementarity-determining-1. The interval 57–71 (WYQQKPGKVPKLLIY) is framework-2. A complementarity-determining-2 region spans residues 72-78 (AASTLQS). Residues 79-110 (GVPSRFSGSGSGTDFTLTISSLQPEDVATYYC) form a framework-3 region. Positions 111–117 (QKYNSAP) are complementarity-determining-3.

Immunoglobulins are composed of two identical heavy chains and two identical light chains; disulfide-linked.

The protein resides in the secreted. The protein localises to the cell membrane. In terms of biological role, v region of the variable domain of immunoglobulin light chains that participates in the antigen recognition. Immunoglobulins, also known as antibodies, are membrane-bound or secreted glycoproteins produced by B lymphocytes. In the recognition phase of humoral immunity, the membrane-bound immunoglobulins serve as receptors which, upon binding of a specific antigen, trigger the clonal expansion and differentiation of B lymphocytes into immunoglobulins-secreting plasma cells. Secreted immunoglobulins mediate the effector phase of humoral immunity, which results in the elimination of bound antigens. The antigen binding site is formed by the variable domain of one heavy chain, together with that of its associated light chain. Thus, each immunoglobulin has two antigen binding sites with remarkable affinity for a particular antigen. The variable domains are assembled by a process called V-(D)-J rearrangement and can then be subjected to somatic hypermutations which, after exposure to antigen and selection, allow affinity maturation for a particular antigen. The protein is Immunoglobulin kappa variable 1-27 of Homo sapiens (Human).